Reading from the N-terminus, the 227-residue chain is 7-cyano-7-deazaguanine synthase (227 aa).

7 to 17 contacts ATP; it reads VSGGMDSLVAT. The Zn(2+) site is built by C187, C195, C198, and C201.

Belongs to the QueC family. The cofactor is Zn(2+).

The enzyme catalyses 7-carboxy-7-deazaguanine + NH4(+) + ATP = 7-cyano-7-deazaguanine + ADP + phosphate + H2O + H(+). It functions in the pathway purine metabolism; 7-cyano-7-deazaguanine biosynthesis. Functionally, catalyzes the ATP-dependent conversion of 7-carboxy-7-deazaguanine (CDG) to 7-cyano-7-deazaguanine (preQ(0)). The protein is 7-cyano-7-deazaguanine synthase of Chlorobaculum tepidum (strain ATCC 49652 / DSM 12025 / NBRC 103806 / TLS) (Chlorobium tepidum).